Consider the following 715-residue polypeptide: Polyribonucleotide nucleotidyltransferase (715 aa).

2 residues coordinate Mg(2+): Asp-498 and Asp-504. One can recognise a KH domain in the interval 565–625 (PKVCMMQIKP…ETVKKTVAFI (61 aa)). Positions 635 to 706 (GTCYQASILR…DRGRIDFLLL (72 aa)) constitute an S1 motif domain.

Belongs to the polyribonucleotide nucleotidyltransferase family. Mg(2+) serves as cofactor.

Its subcellular location is the cytoplasm. The catalysed reaction is RNA(n+1) + phosphate = RNA(n) + a ribonucleoside 5'-diphosphate. Its function is as follows. Involved in mRNA degradation. Catalyzes the phosphorolysis of single-stranded polyribonucleotides processively in the 3'- to 5'-direction. In Onion yellows phytoplasma (strain OY-M), this protein is Polyribonucleotide nucleotidyltransferase.